Here is a 793-residue protein sequence, read N- to C-terminus: Spindle and centriole-associated protein 1 (793 aa).

A disordered region spans residues 1 to 29 (MSYLRASRTSSNLSLAKKPSKTRKKLQAR). A compositionally biased stretch (basic residues) spans 18-27 (KPSKTRKKLQ). Residues 312–405 (SLGLLNSMIM…LTAEILSLKE (94 aa)) are a coiled coil. The disordered stretch occupies residues 519-542 (KTVGNLSSHSAVPKRAANRLPSPP). Residues 622–712 (LQNEDLVSQM…LLKLIEQQKQ (91 aa)) are a coiled coil. Over residues 718–739 (PTLSPITPQGRRTGSSLDTTPL) the composition is skewed to polar residues. The disordered stretch occupies residues 718-783 (PTLSPITPQG…RSQAANDRGE (66 aa)). Residues 740 to 753 (SSCSTSGRRSSGAS) show a composition bias toward low complexity. Polar residues predominate over residues 754–778 (NKSESISTSVGSLRSASTGRRSQAA).

It is found in the cytoplasm. It localises to the cytoskeleton. The protein resides in the microtubule organizing center. The protein localises to the centrosome. Its subcellular location is the centriole. It is found in the spindle. Its function is as follows. Regulator required for centriole duplication. The polypeptide is Spindle and centriole-associated protein 1 (spice1) (Xenopus laevis (African clawed frog)).